Consider the following 190-residue polypeptide: Translation initiation factor IF-3 (190 aa).

It belongs to the IF-3 family. In terms of assembly, monomer.

Its subcellular location is the cytoplasm. IF-3 binds to the 30S ribosomal subunit and shifts the equilibrium between 70S ribosomes and their 50S and 30S subunits in favor of the free subunits, thus enhancing the availability of 30S subunits on which protein synthesis initiation begins. This is Translation initiation factor IF-3 from Prochlorococcus marinus (strain MIT 9312).